Consider the following 396-residue polypeptide: Ornithine aminotransferase (396 aa).

At Lys-255 the chain carries N6-(pyridoxal phosphate)lysine.

This sequence belongs to the class-III pyridoxal-phosphate-dependent aminotransferase family. OAT subfamily. Pyridoxal 5'-phosphate is required as a cofactor.

It is found in the cytoplasm. The catalysed reaction is a 2-oxocarboxylate + L-ornithine = L-glutamate 5-semialdehyde + an L-alpha-amino acid. It functions in the pathway amino-acid biosynthesis; L-proline biosynthesis; L-glutamate 5-semialdehyde from L-ornithine: step 1/1. Functionally, catalyzes the interconversion of ornithine to glutamate semialdehyde. The protein is Ornithine aminotransferase of Staphylococcus epidermidis (strain ATCC 12228 / FDA PCI 1200).